The following is a 256-amino-acid chain: Low molecular mass lipoprotein PBMHP-6 (256 aa).

An N-terminal signal peptide occupies residues 1–19 (MRLTLFAFVLAVCALASNA).

The protein belongs to the 30 kDa lipoprotein family.

It localises to the secreted. This Bombyx mori (Silk moth) protein is Low molecular mass lipoprotein PBMHP-6.